Here is a 1031-residue protein sequence, read N- to C-terminus: Protein translocase subunit SecA (1031 aa).

Residues glutamine 143, 161 to 165 (GEGKT), and aspartate 662 each bind ATP. Cysteine 1015, cysteine 1017, cysteine 1026, and cysteine 1027 together coordinate Zn(2+).

Belongs to the SecA family. As to quaternary structure, monomer and homodimer. Part of the essential Sec protein translocation apparatus which comprises SecA, SecYEG and auxiliary proteins SecDF. Other proteins may also be involved. The cofactor is Zn(2+).

Its subcellular location is the cell inner membrane. It localises to the cytoplasm. The enzyme catalyses ATP + H2O + cellular proteinSide 1 = ADP + phosphate + cellular proteinSide 2.. Part of the Sec protein translocase complex. Interacts with the SecYEG preprotein conducting channel. Has a central role in coupling the hydrolysis of ATP to the transfer of proteins into and across the cell membrane, serving as an ATP-driven molecular motor driving the stepwise translocation of polypeptide chains across the membrane. The chain is Protein translocase subunit SecA from Chlorobaculum tepidum (strain ATCC 49652 / DSM 12025 / NBRC 103806 / TLS) (Chlorobium tepidum).